Consider the following 90-residue polypeptide: Small ribosomal subunit protein uS17 (90 aa).

Belongs to the universal ribosomal protein uS17 family. In terms of assembly, part of the 30S ribosomal subunit.

One of the primary rRNA binding proteins, it binds specifically to the 5'-end of 16S ribosomal RNA. The protein is Small ribosomal subunit protein uS17 of Gluconobacter oxydans (strain 621H) (Gluconobacter suboxydans).